The following is a 158-amino-acid chain: NADH-quinone oxidoreductase subunit B (158 aa).

[4Fe-4S] cluster-binding residues include Cys37, Cys38, Cys102, and Cys132.

It belongs to the complex I 20 kDa subunit family. NDH-1 is composed of 14 different subunits. Subunits NuoB, C, D, E, F, and G constitute the peripheral sector of the complex. The cofactor is [4Fe-4S] cluster.

It localises to the cell inner membrane. It carries out the reaction a quinone + NADH + 5 H(+)(in) = a quinol + NAD(+) + 4 H(+)(out). Functionally, NDH-1 shuttles electrons from NADH, via FMN and iron-sulfur (Fe-S) centers, to quinones in the respiratory chain. Couples the redox reaction to proton translocation (for every two electrons transferred, four hydrogen ions are translocated across the cytoplasmic membrane), and thus conserves the redox energy in a proton gradient. This is NADH-quinone oxidoreductase subunit B from Legionella pneumophila (strain Corby).